The chain runs to 147 residues: uncharacterized protein (147 aa).

This is an uncharacterized protein from Human cytomegalovirus (strain AD169) (HHV-5).